A 585-amino-acid chain; its full sequence is MITRMSELFLRTLRDDPADAEVPSHKLLIRAGYVRAVGPGIYSWLPLGLRVLRKIENVVRSEMNAIGAQEILLPALLPRGPYETTNRWTEYGDTLFRLQDRRNNDYLLGPTHEELFTLTVKGEYSSYKDFPVILYQIQTKYRDEARPRAGILRGREFVMKDSYSFDVDDDGLKNAYYQHREAYQRIFARLGVRYVIVSAVSGAMGGSASEEFLAESEVGEDTFVRCVESGYAANVEAVITRAPEAQPTEGLPEAKVYDTPDTPTIATLVEWANSASLPQFEGRTVTAADTLKNVLLKTREPGGEWELLAVGVPGDREVDEKRLGAALEPAEFALLDDADFAANPFLVKGYVGPKALQDNGVRYLVDPRVVHGSSWITGADAPNRHVVGLVAGRDFTPDGTIEAAEVRDGDPSPDGAGVLTSARGIEIGHIFQLGRKYTDAFSADVLGEDGKPLRLTMGSYGIGVSRLVAVIAEQQHDQLGLRWPSSVAPFDVHVVVANKDAGARAGAAELVADLDRLGHEVLFDDRQASPGVKFKDAELLGMPWIVVVGRGWADGVVELRNRFTGETREIAADGAAAEISSVLAG.

Lys173 is covalently cross-linked (Isoglutamyl lysine isopeptide (Lys-Gln) (interchain with Q-Cter in protein Pup)).

It belongs to the class-II aminoacyl-tRNA synthetase family. ProS type 1 subfamily. Homodimer.

The protein localises to the cytoplasm. The catalysed reaction is tRNA(Pro) + L-proline + ATP = L-prolyl-tRNA(Pro) + AMP + diphosphate. Catalyzes the attachment of proline to tRNA(Pro) in a two-step reaction: proline is first activated by ATP to form Pro-AMP and then transferred to the acceptor end of tRNA(Pro). As ProRS can inadvertently accommodate and process non-cognate amino acids such as alanine and cysteine, to avoid such errors it has two additional distinct editing activities against alanine. One activity is designated as 'pretransfer' editing and involves the tRNA(Pro)-independent hydrolysis of activated Ala-AMP. The other activity is designated 'posttransfer' editing and involves deacylation of mischarged Ala-tRNA(Pro). The misacylated Cys-tRNA(Pro) is not edited by ProRS. This Mycolicibacterium smegmatis (strain ATCC 700084 / mc(2)155) (Mycobacterium smegmatis) protein is Proline--tRNA ligase (proS).